A 461-amino-acid chain; its full sequence is Putative cytochrome P450 132 (461 aa).

Cysteine 409 serves as a coordination point for heme.

The protein belongs to the cytochrome P450 family. Heme serves as cofactor.

The polypeptide is Putative cytochrome P450 132 (cyp132) (Mycobacterium bovis (strain ATCC BAA-935 / AF2122/97)).